Consider the following 185-residue polypeptide: Prenylated Rab acceptor protein 1 (185 aa).

The Cytoplasmic segment spans residues 1–78 (MAVEKDQQKD…RNVEYYQSNY (78 aa)). The required for interaction with prenylated RAB3A and VAMP2 stretch occupies residues 30-54 (AGREWLERRRATIRSWGSFVDQRRF). 2 helical membrane-spanning segments follow: residues 79-94 (VFVFLGLILYCVATSP) and 95-112 (MLLVALAVFFGACYILYL). The Cytoplasmic segment spans residues 113 to 131 (RTLQSKFVLFGREVSPAHQ). 2 consecutive transmembrane segments (helical) span residues 132–148 (YALAGGVSFPFFWLAGA) and 149–165 (GSAVFWVLGATLVVIGS). The tract at residues 165 to 185 (SHAAFHQIEAVDGEELQMEPV) is required for interaction with GDI1. Residues 166 to 185 (HAAFHQIEAVDGEELQMEPV) are Cytoplasmic-facing. The interval 175-185 (VDGEELQMEPV) is required for interaction with prenylated RAB3A and VAMP2. The interval 175–185 (VDGEELQMEPV) is homodimerization.

Belongs to the PRA1 family. Homodimer. Interacts with VAMP2 (synaptobrevin-2), prenylated Rab proteins, GDI1, NDRG1 and PCLO.

It localises to the cell membrane. Its subcellular location is the cytoplasm. It is found in the golgi apparatus. The protein resides in the cytoplasmic vesicle. The protein localises to the secretory vesicle. It localises to the synaptic vesicle. General Rab protein regulator required for vesicle formation from the Golgi complex. May control vesicle docking and fusion by mediating the action of Rab GTPases to the SNARE complexes. In addition it inhibits the removal of Rab GTPases from the membrane by GDI1. This Bos taurus (Bovine) protein is Prenylated Rab acceptor protein 1 (RABAC1).